The primary structure comprises 236 residues: MSRRTRLIAALDTASRSTAQDWADSLKNDVDAIKLGLEFTYACGLDAVKTVSAGHELFLDLKLHDIPHTVASGLTALAPLRPALTTIHASGGSEMIARSREALESAFPADTKRPKLLAVTVLTSMNAEGLLDIGVNATPQEQVLRLGKLAISAGADGLVCSAHEIAPLRDALGDEPVLVVPGIRPAGSASDDQKRIMTPGQAAQAGADWIVVGRPITKAADPVLAARAIMEELASA.

Substrate is bound by residues Asp-12, Lys-34, 60–69 (DLKLHDIPHT), Thr-123, Arg-184, Gln-193, Gly-213, and Arg-214. Lys-62 functions as the Proton donor in the catalytic mechanism.

It belongs to the OMP decarboxylase family. Type 1 subfamily. In terms of assembly, homodimer.

The catalysed reaction is orotidine 5'-phosphate + H(+) = UMP + CO2. The protein operates within pyrimidine metabolism; UMP biosynthesis via de novo pathway; UMP from orotate: step 2/2. Its function is as follows. Catalyzes the decarboxylation of orotidine 5'-monophosphate (OMP) to uridine 5'-monophosphate (UMP). The protein is Orotidine 5'-phosphate decarboxylase of Gluconobacter oxydans (strain 621H) (Gluconobacter suboxydans).